The following is a 375-amino-acid chain: Trichodiene synthase (375 aa).

It belongs to the trichodiene synthase family.

The catalysed reaction is (2E,6E)-farnesyl diphosphate = trichodiene + diphosphate. The protein operates within sesquiterpene biosynthesis; trichothecene biosynthesis. Its function is as follows. TS is a member of the terpene cyclase group of enzymes. It catalyzes the isomerization and cyclization of farnesyl pyro-phosphate to form trichodiene, the first cyclic intermediate in the biosynthetic pathway for trichothecenes. It serves to branch trichothecene biosynthesis from the isoprenoid pathway. This Fusarium boothii protein is Trichodiene synthase (TRI5).